A 206-amino-acid polypeptide reads, in one-letter code: MTDPDLHQNDPENPAQASEPVVSKPYIMPDDPETGSAEAYAKEAAEARDKMLRTLAEMENLRKRTAREVADARMYGITGFARDVLDIADNLQRALDAVPAETRANADAGLKSLIEGVELTERSLLNTLEKNGVKKFDPTGQKFDPNFQQAMYEVPDPSVPSGTVVQVVQAGFMIGERVLRPALVGVSKGGAKAAPAASNDQSNSAA.

Basic and acidic residues predominate over residues M1 to D10. Positions M1–E38 are disordered.

Belongs to the GrpE family. Homodimer.

It localises to the cytoplasm. Its function is as follows. Participates actively in the response to hyperosmotic and heat shock by preventing the aggregation of stress-denatured proteins, in association with DnaK and GrpE. It is the nucleotide exchange factor for DnaK and may function as a thermosensor. Unfolded proteins bind initially to DnaJ; upon interaction with the DnaJ-bound protein, DnaK hydrolyzes its bound ATP, resulting in the formation of a stable complex. GrpE releases ADP from DnaK; ATP binding to DnaK triggers the release of the substrate protein, thus completing the reaction cycle. Several rounds of ATP-dependent interactions between DnaJ, DnaK and GrpE are required for fully efficient folding. This Bradyrhizobium sp. (strain ORS 278) protein is Protein GrpE.